We begin with the raw amino-acid sequence, 186 residues long: Peptidyl-tRNA hydrolase (186 aa).

Y15 lines the tRNA pocket. H20 serves as the catalytic Proton acceptor. TRNA contacts are provided by Y64, N66, and N112.

The protein belongs to the PTH family. In terms of assembly, monomer.

The protein localises to the cytoplasm. The enzyme catalyses an N-acyl-L-alpha-aminoacyl-tRNA + H2O = an N-acyl-L-amino acid + a tRNA + H(+). Its function is as follows. Hydrolyzes ribosome-free peptidyl-tRNAs (with 1 or more amino acids incorporated), which drop off the ribosome during protein synthesis, or as a result of ribosome stalling. In terms of biological role, catalyzes the release of premature peptidyl moieties from peptidyl-tRNA molecules trapped in stalled 50S ribosomal subunits, and thus maintains levels of free tRNAs and 50S ribosomes. This is Peptidyl-tRNA hydrolase from Azobacteroides pseudotrichonymphae genomovar. CFP2.